Here is an 812-residue protein sequence, read N- to C-terminus: Axin-2 (812 aa).

The interval 1–43 (MNRTLTDPMVSSFREDDPRPPVPGEEGETTCHHPSKLAMMRPK) is disordered. The RGS domain maps to 84–203 (SLHFLLGDQD…LTSDIYLEYV (120 aa)). Disordered regions lie at residues 275-326 (SYRR…AIPP), 388-430 (ETMS…TCEE), 446-484 (TPGC…SSMN), and 609-726 (RQTK…SGCH). A compositionally biased stretch (polar residues) spans 285–303 (NRFTSGYSFAPATSANDSE). Low complexity predominate over residues 305-323 (SSDALTDDSMSMTDSSVDA). The tract at residues 329–415 (LGSKKQLQRE…RDESEMSSSS (87 aa)) is interaction with GSK3B. Over residues 388–397 (ETMSSLEERL) the composition is skewed to basic and acidic residues. Residues 401-410 (QEEEERDESE) are compositionally biased toward acidic residues. Residues 411–421 (MSSSSASHSLP) show a composition bias toward low complexity. An interaction with beta-catenin region spans residues 415 to 467 (SASHSLPLLPPGTCEEDPQAILDEHLSRVLKTPGCQSPGLLRHSPRSRSPEQR). Residues 475 to 484 (STRSQSSSMN) show a composition bias toward polar residues. Over residues 672–683 (EEARRRLEEVSK) the composition is skewed to basic and acidic residues. One can recognise a DIX domain in the interval 730 to 812 (GSETVVTYFF…KILGKVDRMD (83 aa)).

Interacts with hwa; leading to promote the tankyrase-mediated degradation of axin1. ADP-ribosylated by tankyrase tnks and tnks2. Poly-ADP-ribosylated protein is recognized by rnf146, followed by ubiquitination and subsequent activation of the Wnt signaling pathway. Post-translationally, ubiquitinated by rnf146 when poly-ADP-ribosylated, leading to its degradation and subsequent activation of the Wnt signaling pathway.

Its subcellular location is the cytoplasm. Its function is as follows. Component of the beta-catenin destruction complex required for regulating ctnnb1 levels through phosphorylation and ubiquitination, and modulating Wnt-signaling. Controls dorsoventral patterning by down-regulating ctnnb1 to inhibit the Wnt signaling pathway and ventralize embryos. The polypeptide is Axin-2 (axin2) (Danio rerio (Zebrafish)).